A 552-amino-acid polypeptide reads, in one-letter code: Gamma-aminobutyric acid receptor subunit alpha-4 (552 aa).

Positions 1–35 (MVSVQKVPAIVLCSGVSLALLHVLCLATCLNESPG) are cleaved as a signal peptide. At 36 to 259 (QNSKDEKLCP…FHLRRKMGYF (224 aa)) the chain is on the extracellular side. The N-linked (GlcNAc...) asparagine glycan is linked to N47. R100 is a 4-aminobutanoate binding site. 2 N-linked (GlcNAc...) asparagine glycosylation sites follow: N144 and N157. T163 is a 4-aminobutanoate binding site. A disulfide bridge connects residues C172 and C186. A helical transmembrane segment spans residues 260-280 (MIQTYIPCIMTVILSQVSFWI). Over 281-284 (NKES) the chain is Cytoplasmic. A helical membrane pass occupies residues 285-305 (VPARTVFGITTVLTMTTLSIS). Residues 306–318 (ARHSLPKVSYATA) lie on the Extracellular side of the membrane. Residues 319-341 (MDWFIAVCFAFVFSALIEFAAVN) traverse the membrane as a helical segment. Residues 342-515 (YFTNIQMQKA…PPPSGSGTSK (174 aa)) are Cytoplasmic-facing. Disordered stretches follow at residues 353 to 436 (KKIS…NPFS), 448 to 470 (ARGL…PLRS), and 486 to 513 (TTVN…GSGT). Residues 403-423 (RTEVGNHSSKTTAAQESSETT) are compositionally biased toward polar residues. Low complexity-rich tracts occupy residues 448 to 458 (ARGLSSAASPS) and 486 to 499 (TTVN…NVSA). Over residues 500-509 (TPPPSAPPPS) the composition is skewed to pro residues. A helical membrane pass occupies residues 516–538 (IDKYARILFPVTFGAFNMVYWVV). The Extracellular segment spans residues 539–552 (YLSKDTMEKSESLM).

Belongs to the ligand-gated ion channel (TC 1.A.9) family. Gamma-aminobutyric acid receptor (TC 1.A.9.5) subfamily. GABRA4 sub-subfamily. In terms of assembly, heteropentamer, formed by a combination of alpha (GABRA1-6), beta (GABRB1-3), gamma (GABRG1-3), delta (GABRD), epsilon (GABRE), rho (GABRR1-3), pi (GABRP) and theta (GABRQ) chains, each subunit exhibiting distinct physiological and pharmacological properties. As to expression, expressed in the brain.

The protein localises to the cell membrane. Its subcellular location is the postsynaptic cell membrane. Its activity is regulated as follows. Potentiated by histamine. Functionally, alpha subunit of the heteropentameric ligand-gated chloride channel gated by gamma-aminobutyric acid (GABA), a major inhibitory neurotransmitter in the brain. GABA-gated chloride channels, also named GABA(A) receptors (GABAAR), consist of five subunits arranged around a central pore and contain GABA active binding site(s) located at the alpha and beta subunit interface(s). Alpha-4/GABRA4 subunit often assembles with delta or gamma-2 subunits, in combination with beta subunits. When activated by GABA, GABAARs selectively allow the flow of chloride anions across the cell membrane down their electrochemical gradient. GABAARs containing alpha-4 are predominantly extrasynaptic, contributing to tonic inhibition in dentate granule cells and thalamic relay neurons. Extrasynaptic alpha-4-containing GABAARs control levels of excitability and network activity. GABAAR containing alpha-4-beta-3-delta subunits can simultaneously bind GABA and histamine where histamine binds at the interface of two neighboring beta subunits, which may be involved in the regulation of sleep and wakefulness. This chain is Gamma-aminobutyric acid receptor subunit alpha-4, found in Rattus norvegicus (Rat).